Here is a 75-residue protein sequence, read N- to C-terminus: Acyl carrier protein (75 aa).

Residues 1-75 (MALFDDVKEV…GDAIKFIENV (75 aa)) form the Carrier domain. At serine 36 the chain carries O-(pantetheine 4'-phosphoryl)serine.

Belongs to the acyl carrier protein (ACP) family. In terms of processing, 4'-phosphopantetheine is transferred from CoA to a specific serine of apo-ACP by AcpS. This modification is essential for activity because fatty acids are bound in thioester linkage to the sulfhydryl of the prosthetic group.

It is found in the cytoplasm. The protein operates within lipid metabolism; fatty acid biosynthesis. In terms of biological role, carrier of the growing fatty acid chain in fatty acid biosynthesis. In Sulfurovum sp. (strain NBC37-1), this protein is Acyl carrier protein.